We begin with the raw amino-acid sequence, 414 residues long: Methyltransferase-like protein 2 (414 aa).

The disordered stretch occupies residues 56-77 (LNQHSSESNPKKRKRKQKNSSF).

This sequence belongs to the MT-A70-like family.

Its function is as follows. Probable methyltransferase. This chain is Methyltransferase-like protein 2, found in Arabidopsis thaliana (Mouse-ear cress).